Here is a 494-residue protein sequence, read N- to C-terminus: 1-aminocyclopropane-1-carboxylate synthase 2 (494 aa).

Residue Lys-279 is modified to N6-(pyridoxal phosphate)lysine. The interval 474–494 is disordered; it reads NVLNSPHTMSPHSPLVRARTY. Positions 475–484 are enriched in polar residues; that stretch reads VLNSPHTMSP.

Belongs to the class-I pyridoxal-phosphate-dependent aminotransferase family. As to quaternary structure, homodimer. Pyridoxal 5'-phosphate is required as a cofactor.

It carries out the reaction S-adenosyl-L-methionine = 1-aminocyclopropane-1-carboxylate + S-methyl-5'-thioadenosine + H(+). The protein operates within alkene biosynthesis; ethylene biosynthesis via S-adenosyl-L-methionine; ethylene from S-adenosyl-L-methionine: step 1/2. In terms of biological role, catalyzes the formation of 1-aminocyclopropane-1-carboxylate, a direct precursor of ethylene in higher plants. The chain is 1-aminocyclopropane-1-carboxylate synthase 2 (ACS2) from Cucurbita pepo (Vegetable marrow).